A 69-amino-acid polypeptide reads, in one-letter code: Putative membrane protein insertion efficiency factor (69 aa).

It belongs to the UPF0161 family.

It is found in the cell membrane. Its function is as follows. Could be involved in insertion of integral membrane proteins into the membrane. In Clostridium botulinum (strain ATCC 19397 / Type A), this protein is Putative membrane protein insertion efficiency factor.